A 103-amino-acid chain; its full sequence is Co-chaperonin GroES (103 aa).

The protein belongs to the GroES chaperonin family. In terms of assembly, heptamer of 7 subunits arranged in a ring. Interacts with the chaperonin GroEL.

It localises to the cytoplasm. In terms of biological role, together with the chaperonin GroEL, plays an essential role in assisting protein folding. The GroEL-GroES system forms a nano-cage that allows encapsulation of the non-native substrate proteins and provides a physical environment optimized to promote and accelerate protein folding. GroES binds to the apical surface of the GroEL ring, thereby capping the opening of the GroEL channel. The sequence is that of Co-chaperonin GroES from Nostoc sp. (strain PCC 7120 / SAG 25.82 / UTEX 2576).